The sequence spans 451 residues: D-ribitol-5-phosphate cytidylyltransferase (451 aa).

Residues 1 to 29 (MEAGPPGSARPAEPGPCLSGQRGADHTAS) form a disordered region.

The protein belongs to the IspD/TarI cytidylyltransferase family. IspD subfamily. In terms of assembly, homodimer. In terms of tissue distribution, ubiquitously expressed, with high expression in brain.

The protein localises to the cytoplasm. It localises to the cytosol. The enzyme catalyses D-ribitol 5-phosphate + CTP + H(+) = CDP-L-ribitol + diphosphate. The catalysed reaction is D-ribose 5-phosphate + CTP + H(+) = CDP-D-ribose + diphosphate. It carries out the reaction D-ribulose 5-phosphate + CTP + H(+) = CDP-D-ribulose + diphosphate. The protein operates within protein modification; protein glycosylation. Its function is as follows. Cytidylyltransferase required for protein O-linked mannosylation. Catalyzes the formation of CDP-ribitol nucleotide sugar from D-ribitol 5-phosphate. CDP-ribitol is a substrate of FKTN during the biosynthesis of the phosphorylated O-mannosyl trisaccharide (N-acetylgalactosamine-beta-3-N-acetylglucosamine-beta-4-(phosphate-6-)mannose), a carbohydrate structure present in alpha-dystroglycan (DAG1), which is required for binding laminin G-like domain-containing extracellular proteins with high affinity. Shows activity toward other pentose phosphate sugars and mediates formation of CDP-ribulose or CDP-ribose using CTP and ribulose-5-phosphate or ribose-5-phosphate, respectively. Not Involved in dolichol production. The protein is D-ribitol-5-phosphate cytidylyltransferase of Homo sapiens (Human).